The chain runs to 746 residues: 1,4-alpha-glucan branching enzyme GlgB (746 aa).

Asp418 serves as the catalytic Nucleophile. Catalysis depends on Glu471, which acts as the Proton donor.

Belongs to the glycosyl hydrolase 13 family. GlgB subfamily. As to quaternary structure, monomer.

It catalyses the reaction Transfers a segment of a (1-&gt;4)-alpha-D-glucan chain to a primary hydroxy group in a similar glucan chain.. Its pathway is glycan biosynthesis; glycogen biosynthesis. Functionally, catalyzes the formation of the alpha-1,6-glucosidic linkages in glycogen by scission of a 1,4-alpha-linked oligosaccharide from growing alpha-1,4-glucan chains and the subsequent attachment of the oligosaccharide to the alpha-1,6 position. This Nitrosospira multiformis (strain ATCC 25196 / NCIMB 11849 / C 71) protein is 1,4-alpha-glucan branching enzyme GlgB.